The chain runs to 103 residues: Large ribosomal subunit protein bL21 (103 aa).

Belongs to the bacterial ribosomal protein bL21 family. In terms of assembly, part of the 50S ribosomal subunit. Contacts protein L20.

In terms of biological role, this protein binds to 23S rRNA in the presence of protein L20. The protein is Large ribosomal subunit protein bL21 of Dechloromonas aromatica (strain RCB).